A 479-amino-acid chain; its full sequence is GTPase Obg (479 aa).

The 158-residue stretch at 2–159 folds into the Obg domain; sequence PRFVDRVVIH…RDLTLELKTV (158 aa). Residues 160–340 enclose the OBG-type G domain; that stretch reads ADVGLVGFPS…LIFGLWQMVS (181 aa). Residues 166–173, 191–195, 212–215, 292–295, and 321–323 contribute to the GTP site; these read GFPSAGKS, FTTLV, DVPG, NKID, and STV. Serine 173 and threonine 193 together coordinate Mg(2+). The OCT domain maps to 358 to 436; it reads PVPVDDSGFD…IGEMTFDWEP (79 aa). Residues 438–479 are disordered; sequence TPAGGHVAMSGRGTDVRLERSDRVGAAERKAARRQRRERDDD. The span at 451–467 shows a compositional bias: basic and acidic residues; the sequence is TDVRLERSDRVGAAERK.

It belongs to the TRAFAC class OBG-HflX-like GTPase superfamily. OBG GTPase family. Monomer. Mg(2+) serves as cofactor.

It localises to the cytoplasm. An essential GTPase which binds GTP, GDP and possibly (p)ppGpp with moderate affinity, with high nucleotide exchange rates and a fairly low GTP hydrolysis rate. Plays a role in control of the cell cycle, stress response, ribosome biogenesis and in those bacteria that undergo differentiation, in morphogenesis control. The sequence is that of GTPase Obg from Mycobacterium marinum (strain ATCC BAA-535 / M).